The chain runs to 209 residues: Redox-sensing transcriptional repressor Rex (209 aa).

Positions 16–55 form a DNA-binding region, H-T-H motif; the sequence is VYIQVLTGLKRDGVEVISSEKLARACSVNPSQIRKDLAYF. 90–95 provides a ligand contact to NAD(+); sequence GVGNLG.

It belongs to the transcriptional regulatory Rex family. Homodimer.

The protein resides in the cytoplasm. Modulates transcription in response to changes in cellular NADH/NAD(+) redox state. This chain is Redox-sensing transcriptional repressor Rex, found in Maridesulfovibrio salexigens (strain ATCC 14822 / DSM 2638 / NCIMB 8403 / VKM B-1763) (Desulfovibrio salexigens).